The primary structure comprises 197 residues: Signal-regulatory protein delta (197 aa).

An N-terminal signal peptide occupies residues 1–29; the sequence is MPIPASPLHPPLPSLLLYLLLELAGVTHV. One can recognise an Ig-like V-type domain in the interval 31 to 135; sequence HVQQTEMSQT…IKEYQSGRGT (105 aa). A disulfide bridge connects residues C51 and C117. The segment at 139 to 158 is disordered; sequence VTEQNPRPPKNRPAGRAGSR. N174 carries N-linked (GlcNAc...) asparagine glycosylation.

It localises to the secreted. This Homo sapiens (Human) protein is Signal-regulatory protein delta (SIRPD).